The following is a 120-amino-acid chain: Holo-[acyl-carrier-protein] synthase (120 aa).

Mg(2+) contacts are provided by Asp-8 and Glu-60.

Belongs to the P-Pant transferase superfamily. AcpS family. Requires Mg(2+) as cofactor.

Its subcellular location is the cytoplasm. The catalysed reaction is apo-[ACP] + CoA = holo-[ACP] + adenosine 3',5'-bisphosphate + H(+). In terms of biological role, transfers the 4'-phosphopantetheine moiety from coenzyme A to a Ser of acyl-carrier-protein. This Anaplasma marginale (strain St. Maries) protein is Holo-[acyl-carrier-protein] synthase.